Here is a 115-residue protein sequence, read N- to C-terminus: Vitelline membrane protein Vm32E (115 aa).

The signal sequence occupies residues 1–17 (MKIVAFTLVAFVALAGA). In terms of domain architecture, VM spans 35 to 72 (GYPAPPCPTNYLFSCQPNLAPAPCAQEAPAYGSAGAYT).

It belongs to the vitelline membrane family.

It is found in the secreted. Its function is as follows. Major early eggshell protein. The chain is Vitelline membrane protein Vm32E from Drosophila yakuba (Fruit fly).